The primary structure comprises 347 residues: KRR1 small subunit processome component homolog (347 aa).

The KH domain occupies 124–194; that stretch reads GCDIIKIGNL…VRDIVLETMN (71 aa). Basic residues predominate over residues 231 to 246; it reads NKNLSKRKQPKVKKPK. A disordered region spans residues 231–347; the sequence is NKNLSKRKQP…LLKANKKSKS (117 aa). Positions 271–304 form a coiled coil; that stretch reads FLNKEQKQAKRQQERQTKQAEAAKKQDERRNKDF. Composition is skewed to basic and acidic residues over residues 272 to 303 and 318 to 329; these read LNKE…RNKD and KANDNDSSDSRV. Over residues 337 to 347 the composition is skewed to basic residues; that stretch reads KLLKANKKSKS.

The protein belongs to the KRR1 family. As to quaternary structure, monomer. Component of the ribosomal small subunit (SSU) processome.

The protein localises to the nucleus. It is found in the nucleolus. Its function is as follows. Required for 40S ribosome biogenesis. Involved in nucleolar processing of pre-18S ribosomal RNA and ribosome assembly. Binds to RNA. Required for female germline development, cell viability during eye development and for survival of dividing cells and epithelial cells during early wing disk development. The chain is KRR1 small subunit processome component homolog from Drosophila willistoni (Fruit fly).